The following is a 463-amino-acid chain: uncharacterized protein (463 aa).

The first 23 residues, 1-23 (MKFSSIPIASTLLSLLVASSVTA), serve as a signal peptide directing secretion. 2 disordered regions span residues 174–200 (STYN…TKAS) and 239–258 (GAST…QRKN).

Belongs to the but2 family.

Its subcellular location is the cytoplasm. This is an uncharacterized protein from Schizosaccharomyces pombe (strain 972 / ATCC 24843) (Fission yeast).